The following is a 353-amino-acid chain: Guanine nucleotide-binding protein subunit alpha (353 aa).

Gly2 is lipidated: N-myristoyl glycine. The S-palmitoyl cysteine moiety is linked to residue Cys3. The G-alpha domain occupies 32-353; the sequence is NEIKMLLLGA…QENLRLCGLI (322 aa). A G1 motif region spans residues 35-48; the sequence is KMLLLGAGESGKST. GTP is bound by residues Glu43, Ser44, Gly45, Lys46, Ser47, Thr48, Asp150, Leu175, Thr181, Gly203, Asn269, Lys270, Asp272, and Ala325. Mg(2+) is bound at residue Ser47. The segment at 173–181 is G2 motif; that stretch reads DVLRSRVKT. A Mg(2+)-binding site is contributed by Thr181. The interval 196–205 is G3 motif; that stretch reads YRMFDVGGQR. Positions 265 to 272 are G4 motif; it reads ILFLNKID. The segment at 323 to 328 is G5 motif; the sequence is TCATDT.

It belongs to the G-alpha family. G(q) subfamily. As to quaternary structure, g proteins are composed of 3 units; alpha, beta and gamma. The alpha chain contains the guanine nucleotide binding site. The cofactor is Mg(2+).

Functionally, guanine nucleotide-binding proteins (G proteins) are involved as modulators or transducers in various transmembrane signaling systems. Involved in the mating pathway. In Cochliobolus heterostrophus (strain C4 / ATCC 48331 / race T) (Southern corn leaf blight fungus), this protein is Guanine nucleotide-binding protein subunit alpha (CGA1).